The chain runs to 540 residues: MKSRKKVVVGVSGDRISGLPDALICHILSFLPTKEAASTTVLAKRWKPLLAFVPNLNFDDSIYFHPRARRNKYSKSYESFMSFVDSVLALQAKTKTPLKRFHVKCEDVVDQSWVLEWIPKVLKRGVLDIDLHITSSRNYCENSSFYSLPSKIFVSKTLVRLKIQFQDGVHIDVEGGVSLPKLKTLHLDYFKIETSMLNKLLSGCHALEELVLANLMWADSSEDEACHVSVSIPTLKRLNFCRSEDFYEGEFHFYEDYDEENINEGVSLSFDNPNLVYLEYSDVIVDKYKQVSFDSLVEANLRLRKTPDQDETDKVNVTKLLMGIHNVKILYLSDDTLEVLSCCRERIPVFDNLLELTIKTTPYVGWKSLPPLLKSCPSLETLVFEGLHHKYTKRCGDKDGCLCKYENHWGTKKKKNVRTCLSSSLVKVLKILKFGETFEDENEDGLDVDHDDYDDEDAVSCDEVGGVVEEQIEHVKHFLETMPVLKQVILYYNTPKDEDVMKVFKKLEKLPRVASANCNVQISSKNLSLSSTSTKRGTLL.

An F-box domain is found at 13–61 (GDRISGLPDALICHILSFLPTKEAASTTVLAKRWKPLLAFVPNLNFDDS). LRR repeat units lie at residues 80 to 105 (FMSFVDSVLALQAKTKTPLKRFHVKC), 137 to 165 (RNYCENSSFYSLPSKIFVSKTLVRLKIQF), 189 to 214 (YFKIETSMLNKLLSGCHALEELVLAN), 217 to 242 (WADSSEDEACHVSVSIPTLKRLNFCR), 254 to 282 (YEDYDEENINEGVSLSFDNPNLVYLEYSD), 329 to 360 (ILYLSDDTLEVLSCCRERIPVFDNLLELTIKT), and 361 to 386 (TPYVGWKSLPPLLKSCPSLETLVFEG).

This chain is Putative F-box/LRR-repeat protein At5g41840, found in Arabidopsis thaliana (Mouse-ear cress).